We begin with the raw amino-acid sequence, 124 residues long: Small ribosomal subunit protein uS12 (124 aa).

The tract at residues 1–20 (MPTIQQLVRKGRTPKVVKTK) is disordered. Over residues 9-18 (RKGRTPKVVK) the composition is skewed to basic residues. The residue at position 89 (aspartate 89) is a 3-methylthioaspartic acid.

Belongs to the universal ribosomal protein uS12 family. Part of the 30S ribosomal subunit. Contacts proteins S8 and S17. May interact with IF1 in the 30S initiation complex.

Its function is as follows. With S4 and S5 plays an important role in translational accuracy. In terms of biological role, interacts with and stabilizes bases of the 16S rRNA that are involved in tRNA selection in the A site and with the mRNA backbone. Located at the interface of the 30S and 50S subunits, it traverses the body of the 30S subunit contacting proteins on the other side and probably holding the rRNA structure together. The combined cluster of proteins S8, S12 and S17 appears to hold together the shoulder and platform of the 30S subunit. In Clavibacter michiganensis subsp. michiganensis (strain NCPPB 382), this protein is Small ribosomal subunit protein uS12.